The chain runs to 487 residues: Alpha-1,4-L-rhamnosidase (487 aa).

Residues 1-30 (MKNKKRLCHILKYIITCFLFGVIFIIPIQA) form the signal peptide. Catalysis depends on Glu-199, which acts as the Proton donor.

Belongs to the glycosyl hydrolase 39 family.

The protein resides in the periplasm. Its function is as follows. Alpha-rhamnosidase involved in ulvan degradation. Ulvan is the main polysaccharide component of the Ulvales (green seaweed) cell wall. It is composed of disaccharide building blocks comprising 3-sulfated rhamnose (Rha3S) linked to D-glucuronic acid (GlcA), L-iduronic acid (IduA), or D-xylose (Xyl). Endo-acting alpha-1,4-L-rhamnosidase cleaves rhamnose sections interspersed between xylose residues within the polymer, degrading larger oligomers with consecutive Xyl-Rha3S units that are resistant to the ulvan lyases and producing dimers Xyl-Rha3S and Xyl2S-Rha3S as the smallest products. This Formosa agariphila (strain DSM 15362 / KCTC 12365 / LMG 23005 / KMM 3901 / M-2Alg 35-1) protein is Alpha-1,4-L-rhamnosidase.